The primary structure comprises 465 residues: Dihydrolipoyl dehydrogenase (465 aa).

FAD contacts are provided by residues 34–42 (EKREAGGTC), lysine 51, and glycine 114. Cysteine 42 and cysteine 47 form a disulfide bridge. NAD(+) is bound by residues 180–184 (GGGVI), glutamate 203, valine 237, and 264–267 (SIGR). 2 residues coordinate FAD: aspartate 307 and alanine 315. Residue histidine 439 is the Proton acceptor of the active site.

The protein belongs to the class-I pyridine nucleotide-disulfide oxidoreductase family. FAD serves as cofactor.

It is found in the cytoplasm. It carries out the reaction N(6)-[(R)-dihydrolipoyl]-L-lysyl-[protein] + NAD(+) = N(6)-[(R)-lipoyl]-L-lysyl-[protein] + NADH + H(+). The branched-chain alpha-keto dehydrogenase complex catalyzes the overall conversion of alpha-keto acids to acyl-CoA and CO(2). It contains multiple copies of 3 enzymatic components: branched-chain alpha-keto acid decarboxylase (E1), lipoamide acyltransferase (E2) and lipoamide dehydrogenase (E3). This is Dihydrolipoyl dehydrogenase (lpdA) from Chlamydia trachomatis serovar D (strain ATCC VR-885 / DSM 19411 / UW-3/Cx).